The primary structure comprises 424 residues: Myb family transcription factor RLI1 (424 aa).

The disordered stretch occupies residues 144 to 165 (RPQKRDSGERTPLPPPSQQQHQ). In terms of domain architecture, HTH myb-type spans 238 to 298 (APSKTRIRWT…HLQKYRIAKY (61 aa)). A DNA-binding region (H-T-H motif) is located at residues 269–294 (PKGILKLMNSDGLTIYHIKSHLQKYR). Positions 342-347 (LHEQLE) match the LHEQLE motif. Residues 342–391 (LHEQLEIQRNLQLRIEEQGKRLQKMFEDQLKASRSVMEPQELDDVVAFAA) adopt a coiled-coil conformation.

The protein belongs to the MYB-CC family. Homodimer. Interacts with PHR2 in the nucleus. Interacts with SPX1 and SPX2 in the nucleus; these interactions prevent binding to the promoters of target genes, thus regulating negatively leaf inclination in response to phosphate (Pi) starvation.

It localises to the nucleus. Transcription factor binding to specific DNA sequences of target genes promoters, such as the motif R1BS 5'-NAKATNCN-3' and the motif P1BS 5'-GNATATNC-3' to trigger their expression. Nitrate-induced component involved in modulating phosphate (Pi) response and homeostasis together with PHR2; activates directly the expression of Pi starvation-induced (PSI) genes upon nitrate disponibility, thus triggering the nitrate-induced phosphate response (NIPR) promoting Pi uptake activity. Involved in the shoot architecture; positively regulates leaf inclination by affecting lamina joint cell elongation via the direct promotion of ILI4/BU1 and BC1 genes expression, especially in response to phosphate (Pi) availability. Regulates both brassinolide (BL) biosynthesis and signaling by directly activating BL-biosynthesis and signaling genes. The protein is Myb family transcription factor RLI1 of Oryza sativa subsp. indica (Rice).